A 514-amino-acid chain; its full sequence is ATP synthase subunit alpha (514 aa).

An ATP-binding site is contributed by 170–177 (GDRQIGKT).

Belongs to the ATPase alpha/beta chains family. In terms of assembly, F-type ATPases have 2 components, CF(1) - the catalytic core - and CF(0) - the membrane proton channel. CF(1) has five subunits: alpha(3), beta(3), gamma(1), delta(1), epsilon(1). CF(0) has three main subunits: a(1), b(2) and c(9-12). The alpha and beta chains form an alternating ring which encloses part of the gamma chain. CF(1) is attached to CF(0) by a central stalk formed by the gamma and epsilon chains, while a peripheral stalk is formed by the delta and b chains.

The protein localises to the cell inner membrane. The catalysed reaction is ATP + H2O + 4 H(+)(in) = ADP + phosphate + 5 H(+)(out). Produces ATP from ADP in the presence of a proton gradient across the membrane. The alpha chain is a regulatory subunit. This is ATP synthase subunit alpha from Stutzerimonas stutzeri (strain A1501) (Pseudomonas stutzeri).